The following is a 129-amino-acid chain: Small ribosomal subunit protein uS9 (129 aa).

The protein belongs to the universal ribosomal protein uS9 family.

In Helicobacter acinonychis (strain Sheeba), this protein is Small ribosomal subunit protein uS9.